Here is a 201-residue protein sequence, read N- to C-terminus: Small ribosomal subunit protein uS4 (201 aa).

Positions 91-157 constitute an S4 RNA-binding domain; that stretch reads SRLDNVVYRA…LPFQVARETV (67 aa).

It belongs to the universal ribosomal protein uS4 family. Part of the 30S ribosomal subunit. Contacts protein S5. The interaction surface between S4 and S5 is involved in control of translational fidelity.

Functionally, one of the primary rRNA binding proteins, it binds directly to 16S rRNA where it nucleates assembly of the body of the 30S subunit. Its function is as follows. With S5 and S12 plays an important role in translational accuracy. The protein is Small ribosomal subunit protein uS4 of Rhodococcus erythropolis (strain PR4 / NBRC 100887).